The sequence spans 230 residues: Sperm-associated antigen 7 homolog (230 aa).

Residues 1-45 are disordered; that stretch reads MADLLGSILSSMEKPPTVHDQESRRKAREQAARLKKLEEDERRKK. The span at 16-45 shows a compositional bias: basic and acidic residues; the sequence is PTVHDQESRRKAREQAARLKKLEEDERRKK. In terms of domain architecture, R3H spans 46–109; the sequence is AEFRKKMEKE…ESRYVMLFKK (64 aa). Over residues 119–144 the composition is skewed to basic and acidic residues; sequence EAYRKGEEWDPQKAEERRRLKEKAAL. 2 disordered regions span residues 119-169 and 185-230; these read EAYR…KYSH and ANRA…GSSV. The residue at position 158 (serine 158) is a Phosphoserine. Positions 196-211 are enriched in basic and acidic residues; that stretch reads NKRDTRSIEEAMNEIR.

The polypeptide is Sperm-associated antigen 7 homolog (spag7) (Danio rerio (Zebrafish)).